The following is a 227-amino-acid chain: Ubiquitin domain-containing protein 1 (227 aa).

Residues 1–36 (MGNCVGRQRRERPTAPGHPRKRAGRNEPLKKERLKW) are disordered. The segment covering 24 to 36 (GRNEPLKKERLKW) has biased composition (basic and acidic residues). One can recognise a Ubiquitin-like domain in the interval 149–224 (FPLKVRLSTG…IQVIINQPPP (76 aa)).

As to quaternary structure, interacts with UBTD1.

Functionally, may be involved in the regulation of cellular senescence through a positive feedback loop with TP53. Is a TP53 downstream target gene that increases the stability of TP53 protein by promoting the ubiquitination and degradation of MDM2. This chain is Ubiquitin domain-containing protein 1 (UBTD1), found in Bos taurus (Bovine).